Reading from the N-terminus, the 404-residue chain is G1/S-specific cyclin-E2 (404 aa).

The segment at Met1–Glu44 is disordered. The segment covering Gln12–Gln26 has biased composition (low complexity). Ser21 is modified (phosphoserine). Positions Thr35–Glu44 are enriched in basic and acidic residues. An N6-lactoyllysine modification is found at Lys348. Ser383 bears the Phosphoserine mark. A Phosphothreonine modification is found at Thr392.

It belongs to the cyclin family. Cyclin E subfamily. Interacts with the CDK2 (in vivo) and CDK3 (in vitro) protein kinases to form a serine/threonine kinase holoenzyme complex. The cyclin subunit imparts substrate specificity to the complex. Post-translationally, phosphorylation by CDK2 triggers its release from CDK2 and degradation via the ubiquitin proteasome pathway. In terms of processing, lactylated at Lys-348. Delactylated by SIRT3. According to PubMed:9858585, highest levels of expression in adult testis, thymus and brain. Lower levels in placenta, spleen and colon. Consistently elevated levels in tumor-derived cells compared to non-transformed proliferating cells. According to PubMed:9840927: low levels in thymus, prostate, brain, skeletal muscle, and kidney. Elevated levels in lung. According to PubMed:9840943 highly expressed in testis, placenta, thymus and brain. In a lesser extent in small intestine and colon.

The protein resides in the nucleus. Functionally, essential for the control of the cell cycle at the late G1 and early S phase. The protein is G1/S-specific cyclin-E2 (CCNE2) of Homo sapiens (Human).